The primary structure comprises 217 residues: MSKSRAEAAAGAPGIILRYLQEQNRPYSAQDVFGNLQKEHGLGKAAVVKALDQLAQEGKIKEKTYGKQKIYFADQNQFDTVSDADLHGLDASIVALTAKVQSLQQSCRHMEAELKELTSALTTPEMQKEIQELKKECAQYTERLKNIKAATNHVTPEEKEKVYRDRQKYCKEWRKRKRMTTELCDAILEGYPKSKKQFFEEVGIETDEDHNVLLPDP.

Residues 84–152 (ADLHGLDASI…RLKNIKAATN (69 aa)) are a coiled coil. Positions 118–182 (TSALTTPEMQ…WRKRKRMTTE (65 aa)) are DNA-binding.

The protein belongs to the HOP2 family. Interacts with the DNA-binding domain of the nuclear receptors NR3C1/GR, ESR2/ER-beta, THRB and RXRA. Forms a stable heterodimer with MND1. Interacts with PSMC3/TBP1. Phosphorylated by PKA, PKC and MAPK. As to expression, highly expressed in testis and more specifically in spermatocytes. Detected in spleen, ovary and thymus.

It localises to the nucleus. Functionally, plays an important role in meiotic recombination. Stimulates DMC1-mediated strand exchange required for pairing homologous chromosomes during meiosis. The complex PSMC3IP/MND1 binds DNA, stimulates the recombinase activity of DMC1 as well as DMC1 D-loop formation from double-strand DNA. This complex stabilizes presynaptic RAD51 and DMC1 filaments formed on single strand DNA to capture double-strand DNA. This complex stimulates both synaptic and presynaptic critical steps in RAD51 and DMC1-promoted homologous pairing. May inhibit HIV-1 viral protein TAT activity and modulate the activity of proteasomes through association with PSMC3. The protein is Homologous-pairing protein 2 homolog (Psmc3ip) of Mus musculus (Mouse).